Reading from the N-terminus, the 248-residue chain is Triosephosphate isomerase (248 aa).

9–11 (NWK) is a binding site for substrate. Residue H94 is the Electrophile of the active site. E166 acts as the Proton acceptor in catalysis. Residues G172, S212, and 233-234 (GG) each bind substrate.

It belongs to the triosephosphate isomerase family. As to quaternary structure, homodimer.

It localises to the cytoplasm. The catalysed reaction is D-glyceraldehyde 3-phosphate = dihydroxyacetone phosphate. It functions in the pathway carbohydrate biosynthesis; gluconeogenesis. It participates in carbohydrate degradation; glycolysis; D-glyceraldehyde 3-phosphate from glycerone phosphate: step 1/1. In terms of biological role, involved in the gluconeogenesis. Catalyzes stereospecifically the conversion of dihydroxyacetone phosphate (DHAP) to D-glyceraldehyde-3-phosphate (G3P). This is Triosephosphate isomerase from Thermoanaerobacter pseudethanolicus (strain ATCC 33223 / 39E) (Clostridium thermohydrosulfuricum).